The primary structure comprises 341 residues: Bis(monoacylglycero)phosphate synthase CLN5 (341 aa).

The Cytoplasmic portion of the chain corresponds to 1 to 13 (MLRGGPCGAHWRP). Residues 14 to 30 (ALALALLGLATILGASP) form a helical; Signal-anchor for type II membrane protein membrane-spanning segment. Residues 31–341 (TSGQRWPVPY…PTRHTTFTDL (311 aa)) are Lumenal-facing. Disulfide bonds link C53/C142 and C60/C148. H100 (proton acceptor) is an active-site residue. Residues N113, N126, N161, and N186 are each glycosylated (N-linked (GlcNAc...) asparagine). C214 serves as the catalytic Nucleophile; Acyl-thioester intermediate. N-linked (GlcNAc...) asparagine glycans are attached at residues N238, N254, and N264. The interval 287-326 (FLMNFLKIFDTVIIHRQFYLFYNFEYWFLPMKPPFVKITY) is membrane-anchoring.

The protein belongs to the CLN5 family. In terms of assembly, multimer. Interacts with PPT1, TPP1, CLN3, CLN6, CLN8, ATP5F1A and ATP5F1B. Interacts with SORT1, RAB5A and RAB7A. N-glycosylated with both high mannose and complex type sugars. Glycosylation is important for proper folding and trafficking to the lysosomes. In terms of processing, the type II membrane signal anchor is proteolytically cleaved to produce a mature form that is transported to the lysosomes (Bis(monoacylglycero)phosphate synthase CLN5, secreted form). Post-translationally, can undergo proteolytic cleavage at the C-terminus, probably by a cysteine protease and may involve the removal of approximately 10-15 residues from the C-terminal end. In terms of tissue distribution, heart, kidney, liver, spleen, muscle and rectum (at protein level).

The protein resides in the lysosome. It is found in the membrane. The catalysed reaction is S-hexadecanoyl-L-cysteinyl-[protein] + H2O = L-cysteinyl-[protein] + hexadecanoate + H(+). It catalyses the reaction 2 1-acyl-sn-glycero-3-phospho-(1'-sn-glycerol) = 1-acyl-sn-glycero-3-phospho-(3'-acyl-sn-1'-glycerol) + sn-glycero-3-phospho-(1'-sn-glycerol). The enzyme catalyses 2 1-(9Z-octadecenoyl)-sn-glycero-3-phospho-(1'-sn-glycerol) = 1-(9Z-octadecenoyl)-sn-glycero-3-phospho-(3'-(9Z-octadecenoyl)-1'-sn-glycerol) + sn-glycero-3-phospho-(1'-sn-glycerol). It carries out the reaction 2 1-octadecanoyl-sn-glycero-3-phospho-(1'-sn-glycerol) = 1-octadecanoyl-sn-glycero-3-phospho-(3'-octadecanoyl-1'-sn-glycerol) + sn-glycero-3-phospho-(1'-sn-glycerol). The catalysed reaction is 2 1-hexadecanoyl-sn-glycero-3-phospho-(1'-sn-glycerol) = 1-hexadecanoyl-sn-glycero-3-phospho-(3'-hexadecanoyl-1'-sn-glycerol) + sn-glycero-3-phospho-(1'-sn-glycerol). It catalyses the reaction 2 1-tetradecanoyl-sn-glycero-3-phospho-(1'-sn-glycerol) = 1-tetradecanoyl-sn-glycero-3-phospho-(3'-tetradecanoyl-1'-sn-glycerol) + sn-glycero-3-phospho-(1'-sn-glycerol). Its function is as follows. Catalyzes the synthesis of bis(monoacylglycero)phosphate (BMP) via transacylation of 2 molecules of lysophosphatidylglycerol (LPG). BMP also known as lysobisphosphatidic acid plays a key role in the formation of intraluminal vesicles and in maintaining intracellular cholesterol homeostasis. Can use only LPG as the exclusive lysophospholipid acyl donor for base exchange and displays BMP synthase activity towards various LPGs (LPG 14:0, LPG 16:0, LPG 18:0, LPG 18:1) with a higher preference for longer chain lengths. Plays a role in influencing the retrograde trafficking of lysosomal sorting receptors SORT1 and IGF2R from the endosomes to the trans-Golgi network by controlling the recruitment of retromer complex to the endosomal membrane. Regulates the localization and activation of RAB7A which is required to recruit the retromer complex to the endosomal membrane. Exhibits palmitoyl protein thioesterase (S-depalmitoylation) activity in vitro and most likely plays a role in protein S-depalmitoylation. This Mus musculus (Mouse) protein is Bis(monoacylglycero)phosphate synthase CLN5 (Cln5).